We begin with the raw amino-acid sequence, 347 residues long: Ribosomal RNA large subunit methyltransferase M (347 aa).

S-adenosyl-L-methionine is bound by residues S184, 217-220, D236, D256, and D272; that span reads APGG. K301 functions as the Proton acceptor in the catalytic mechanism.

It belongs to the class I-like SAM-binding methyltransferase superfamily. RNA methyltransferase RlmE family. RlmM subfamily. Monomer.

The protein resides in the cytoplasm. It carries out the reaction cytidine(2498) in 23S rRNA + S-adenosyl-L-methionine = 2'-O-methylcytidine(2498) in 23S rRNA + S-adenosyl-L-homocysteine + H(+). In terms of biological role, catalyzes the 2'-O-methylation at nucleotide C2498 in 23S rRNA. The polypeptide is Ribosomal RNA large subunit methyltransferase M (Xanthomonas oryzae pv. oryzae (strain MAFF 311018)).